Reading from the N-terminus, the 276-residue chain is MRRDVNGVTKSRFEMFSNSDEAVINKKLPKELLLRIFSFLDVVTLCRCAQVSRAWNVLALDGSNWQRIDLFDFQRDIEGRVVENISKRCGGFLRKLSLRGCLGVGDNALRTFAQNCRNIEVLSLNGCTKTTDATCTSLSKFCSKLRHLDLASCTSITNMSLKALSEGCPLLEQLNISWCDQVTKDGIQALVRGCGGLKALFLKGCTQLEDEALKYIGAHCPELVTLNLQTCLQITDEGLITICRGCHKLQSLCASGCSNITDAILNALGQNCPRLR.

One can recognise an F-box domain in the interval 22 to 68 (AVINKKLPKELLLRIFSFLDVVTLCRCAQVSRAWNVLALDGSNWQRI). LRR repeat units lie at residues 74–100 (QRDIEGRVVENISKRCGGFLRKLSLRG), 101–126 (CLGVGDNALRTFAQNCRNIEVLSLNG), 127–152 (CTKTTDATCTSLSKFCSKLRHLDLAS), 153–178 (CTSITNMSLKALSEGCPLLEQLNISW), 179–204 (CDQVTKDGIQALVRGCGGLKALFLKG), 205–230 (CTQLEDEALKYIGAHCPELVTLNLQT), 231–256 (CLQITDEGLITICRGCHKLQSLCASG), and 257–276 (CSNITDAILNALGQNCPRLR).

Interacts with SKP1 and CUL1. As to expression, widely expressed, with highest expression in skeletal muscle, heart and brain.

The protein localises to the cytoplasm. Substrate-recognition component of the SCF (SKP1-CUL1-F-box protein)-type E3 ubiquitin ligase complex. Role in neural transmission. This chain is F-box/LRR-repeat protein 20 (Fbxl20), found in Rattus norvegicus (Rat).